The sequence spans 187 residues: Troponin I, slow skeletal muscle (187 aa).

P2 is modified (N-acetylproline). Positions 2 to 48 are involved in binding TNC; that stretch reads PEVERKSKITASRKLMLKSLMLAKAKECWEQEHEEREAEKVRYLSER. Residue S58 is modified to Phosphoserine. Positions 97–118 are involved in binding TNC and actin; it reads LKLKVLDLRGKFKRPPLRRVRV.

This sequence belongs to the troponin I family. As to quaternary structure, binds to actin and tropomyosin.

Functionally, troponin I is the inhibitory subunit of troponin, the thin filament regulatory complex which confers calcium-sensitivity to striated muscle actomyosin ATPase activity. In Rattus norvegicus (Rat), this protein is Troponin I, slow skeletal muscle (Tnni1).